We begin with the raw amino-acid sequence, 489 residues long: Cytochrome P450-DIT2 (489 aa).

A heme-binding site is contributed by cysteine 435.

Belongs to the cytochrome P450 family. Heme serves as cofactor.

Involved in spore wall maturation. Thought to catalyze the oxidation of tyrosine residues in the formation of LL-dityrosine a precursor of the spore wall. This chain is Cytochrome P450-DIT2 (DIT2), found in Saccharomyces cerevisiae (strain ATCC 204508 / S288c) (Baker's yeast).